The sequence spans 145 residues: uncharacterized protein (145 aa).

This is an uncharacterized protein from Bacillus subtilis (strain 168).